A 300-amino-acid polypeptide reads, in one-letter code: GTPase Era (300 aa).

An Era-type G domain is found at 8-176 (RCGYVAIVGR…ERLVAGRLPQ (169 aa)). The G1 stretch occupies residues 16 to 23 (GRPNVGKS). 16-23 (GRPNVGKS) contacts GTP. Residues 42–46 (QTTRH) form a G2 region. The G3 stretch occupies residues 63–66 (DTPG). Residues 63–67 (DTPGL) and 125–128 (NKAD) each bind GTP. The interval 125 to 128 (NKAD) is G4. The G5 stretch occupies residues 155-157 (ISA). The region spanning 199 to 283 (VREKIMRQLG…MLNLWVKVKG (85 aa)) is the KH type-2 domain.

This sequence belongs to the TRAFAC class TrmE-Era-EngA-EngB-Septin-like GTPase superfamily. Era GTPase family. Monomer.

It is found in the cytoplasm. The protein resides in the cell inner membrane. Functionally, an essential GTPase that binds both GDP and GTP, with rapid nucleotide exchange. Plays a role in 16S rRNA processing and 30S ribosomal subunit biogenesis and possibly also in cell cycle regulation and energy metabolism. The chain is GTPase Era from Azotobacter vinelandii (strain DJ / ATCC BAA-1303).